The sequence spans 215 residues: ATP-dependent Clp protease proteolytic subunit (215 aa).

Serine 116 (nucleophile) is an active-site residue. Histidine 141 is an active-site residue.

The protein belongs to the peptidase S14 family. As to quaternary structure, fourteen ClpP subunits assemble into 2 heptameric rings which stack back to back to give a disk-like structure with a central cavity, resembling the structure of eukaryotic proteasomes.

It localises to the cytoplasm. It carries out the reaction Hydrolysis of proteins to small peptides in the presence of ATP and magnesium. alpha-casein is the usual test substrate. In the absence of ATP, only oligopeptides shorter than five residues are hydrolyzed (such as succinyl-Leu-Tyr-|-NHMec, and Leu-Tyr-Leu-|-Tyr-Trp, in which cleavage of the -Tyr-|-Leu- and -Tyr-|-Trp bonds also occurs).. In terms of biological role, cleaves peptides in various proteins in a process that requires ATP hydrolysis. Has a chymotrypsin-like activity. Plays a major role in the degradation of misfolded proteins. This chain is ATP-dependent Clp protease proteolytic subunit, found in Psychrobacter cryohalolentis (strain ATCC BAA-1226 / DSM 17306 / VKM B-2378 / K5).